Consider the following 122-residue polypeptide: MAQRVTYRRRNPYNTRSNKIKVVKTPGGKLVAQHVKKAASRVKCGDCGSALAGISTLRPRQYAQVSKTHKTVQRAYGGSRCANCVKERIVRAFLIEEQKIVKRVLKEQQDKEKKAAKKTGKK.

It belongs to the eukaryotic ribosomal protein eL34 family. Component of the large ribosomal subunit. Mature ribosomes consist of a small (40S) and a large (60S) subunit. The 40S subunit contains about 32 different proteins and 1 molecule of RNA (18S). The 60S subunit contains 45 different proteins and 3 molecules of RNA (25S, 5.8S and 5S).

The protein localises to the cytoplasm. In terms of biological role, component of the ribosome, a large ribonucleoprotein complex responsible for the synthesis of proteins in the cell. The small ribosomal subunit (SSU) binds messenger RNAs (mRNAs) and translates the encoded message by selecting cognate aminoacyl-transfer RNA (tRNA) molecules. The large subunit (LSU) contains the ribosomal catalytic site termed the peptidyl transferase center (PTC), which catalyzes the formation of peptide bonds, thereby polymerizing the amino acids delivered by tRNAs into a polypeptide chain. The nascent polypeptides leave the ribosome through a tunnel in the LSU and interact with protein factors that function in enzymatic processing, targeting, and the membrane insertion of nascent chains at the exit of the ribosomal tunnel. In Candida albicans (strain SC5314 / ATCC MYA-2876) (Yeast), this protein is Large ribosomal subunit protein eL34.